Consider the following 281-residue polypeptide: MSNHSEILERPETPYDITYRVGVAENKNSKFRRTMEDVHTYVKNFASRLDWGYFAVFDGHAGIQASKWCGKHLHTIIEQNILADETRDVRDVLNDSFLAIDEEINTKLVGNSGCTAAVCVLRWELPDSVSDDSMDLAQHQRKLYTANVGDSRIVLFRNGNSIRLTYDHKASDTLEMQRVEQAGGLIMKSRVNGMLAVTRSLGDKFFDSLVVGSPFTTSVEITSEDKFLILACDGLWDVIDDQDACELIKDITEPNEAAKVLVRYALENGTTDNVTVMVVFL.

The PPM-type phosphatase domain maps to 20 to 281; it reads RVGVAENKNS…DNVTVMVVFL (262 aa). Residues Asp-58, Gly-59, Asp-233, and Asp-272 each coordinate Mn(2+).

This sequence belongs to the PP2C family. Interacts with NBP2 and PBS2. Mg(2+) is required as a cofactor. Requires Mn(2+) as cofactor.

It localises to the peroxisome. The catalysed reaction is O-phospho-L-seryl-[protein] + H2O = L-seryl-[protein] + phosphate. The enzyme catalyses O-phospho-L-threonyl-[protein] + H2O = L-threonyl-[protein] + phosphate. In terms of biological role, serine and threonine phosphatase. Involved in tRNA splicing and cell separation. The sequence is that of Protein phosphatase 2C homolog 1 (PTC1) from Saccharomyces cerevisiae (strain ATCC 204508 / S288c) (Baker's yeast).